The following is a 339-amino-acid chain: MEANFSIPQNGSEVVFYDSTTSRVICIFLVVVLSITFLLGVIGNGLVIYVAGFRMTHTVTTICYLNLALSDFSYMASLPFQITSIVMNGEWLFGWFLCKFVHMIINVNLFLSIFLITFIAMDRCICVLHPVWAQNHRTVNVATKVIFGAWILVLMLIFPHCIFVTTVKDESGKVHCICNFESWAATPEEQVKVSMTVSLISVTISFIIGFSIPMIFIVICYGLMAAKIGRRGFVNSSRPLRVLTAVAISFFVCWFPFQLIFLLGNIGNKETQNNIDTWVNTASTLASFNSCLNPILYVFLGQQFRERLIYSLSASLERALREDSALNSDKTRNLSSQRL.

Residues Met1–Arg23 are Extracellular-facing. N-linked (GlcNAc...) asparagine glycosylation is found at Asn4 and Asn10. The helical transmembrane segment at Val24 to Asn44 threads the bilayer. The Cytoplasmic portion of the chain corresponds to Gly45 to Ile62. Residues Cys63 to Ile85 traverse the membrane as a helical segment. The Extracellular segment spans residues Val86–Lys99. A disulfide bond links Cys98 and Cys178. A helical transmembrane segment spans residues Phe100–Ala120. Topologically, residues Met121–Lys144 are cytoplasmic. A helical membrane pass occupies residues Val145–Thr165. Residues Thr166–Ser198 lie on the Extracellular side of the membrane. Residues Leu199–Ile219 traverse the membrane as a helical segment. Residues Cys220 to Arg241 lie on the Cytoplasmic side of the membrane. Residues Val242 to Leu262 traverse the membrane as a helical segment. Over Leu263–Asn280 the chain is Extracellular. A helical membrane pass occupies residues Thr281–Gly301. Topologically, residues Gln302–Leu339 are cytoplasmic.

This sequence belongs to the G-protein coupled receptor 1 family. In terms of tissue distribution, expressed exclusively in vomeronasal tissue. Expressed in 1.2 % of a subset of sensory neurons located in the apical layer of the vomeronasal organ. Each neuron appears to express only one receptor gene. Expressed in brain, spleen, skeletal muscle and at high level in testis.

The protein resides in the membrane. Its function is as follows. May have an olfactory function associated with the identification of pathogens or of pathogenic states. This Mus musculus (Mouse) protein is Formyl peptide receptor-related sequence 6 (Fpr-rs6).